Consider the following 73-residue polypeptide: Disintegrin mojastin-2 (73 aa).

Residues 1-73 (EAGEECDCGS…ADCPRNGLYG (73 aa)) form the Disintegrin domain. 6 cysteine pairs are disulfide-bonded: C6–C21, C8–C16, C15–C38, C29–C35, C34–C59, and C47–C66. Positions 51-53 (RGD) match the Cell attachment site motif.

It belongs to the venom metalloproteinase (M12B) family. P-II subfamily. P-IIa sub-subfamily. In terms of assembly, monomer (disintegrin). Expressed by the venom gland.

It is found in the secreted. In terms of biological role, inhibits the three processes involved in platelet function (adhesion, activation and aggregation). It inhibits platelet adhesion to fibronectin with an IC(50) of 58.6 nM. It inhibits ATP release from platelet induced by ADP with an IC(50) of 19.5 nM on platelet-rich plasma, probably by binding to ADP receptors (P2RY1 and P2RY12). Finally, it inhibits ADP-induced platelet aggregation with IC(50) of 44.7 nM on platelet-rich plasma and 19.3 nM on whole blood, probably by binding to alpha-IIb/beta-3 (ITGA2B/ITGB3). Inhibits ADP-induced platelet aggregation (IC(50) = 13.8 nM) probably by binding to alpha-IIb/beta-3 (ITGA2B/ITGB3) located on the platelet surface. The protein is Disintegrin mojastin-2 of Crotalus scutulatus scutulatus (Mojave rattlesnake).